A 490-amino-acid chain; its full sequence is Betaine aldehyde dehydrogenase (490 aa).

2 residues coordinate K(+): Ile27 and Asp93. Residue 150–152 (GAW) coordinates NAD(+). Lys162 functions as the Charge relay system in the catalytic mechanism. 176–179 (KPSE) is a binding site for NAD(+). Val180 serves as a coordination point for K(+). Residue 230-233 (GTTT) participates in NAD(+) binding. Residue Leu246 participates in K(+) binding. Glu252 (proton acceptor) is an active-site residue. Positions 254, 286, and 387 each coordinate NAD(+). The active-site Nucleophile is Cys286. Cysteine sulfenic acid (-SOH) is present on Cys286. Positions 457 and 460 each coordinate K(+). The active-site Charge relay system is the Glu464.

This sequence belongs to the aldehyde dehydrogenase family. Dimer of dimers. It depends on K(+) as a cofactor.

The enzyme catalyses betaine aldehyde + NAD(+) + H2O = glycine betaine + NADH + 2 H(+). Its pathway is amine and polyamine biosynthesis; betaine biosynthesis via choline pathway; betaine from betaine aldehyde: step 1/1. Functionally, involved in the biosynthesis of the osmoprotectant glycine betaine. Catalyzes the irreversible oxidation of betaine aldehyde to the corresponding acid. The chain is Betaine aldehyde dehydrogenase from Pseudomonas putida (strain W619).